The sequence spans 404 residues: Keratin, type I cuticular Ha3-I (404 aa).

The segment at 1–56 (MSYSCGLPSLSCRTSCSSRPCVPPSCHGCTLPGACNIPANVSNCNWFCEGSFNGSE) is head. The IF rod domain occupies 56 to 367 (EKETMQFLND…SLLESEDCKL (312 aa)). A coil 1A region spans residues 57–91 (KETMQFLNDRLASYLEKVRQLERDNAELENLIRER). The tract at residues 92-102 (SQQQEPLVCAS) is linker 1. The coil 1B stretch occupies residues 103 to 203 (YQSYFKTIEE…HEQEVNTLRC (101 aa)). The tract at residues 204 to 219 (QLGDRLNVEVDAAPTV) is linker 12. The tract at residues 220 to 363 (DLNQVLNETR…NTYRSLLESE (144 aa)) is coil 2. A tail region spans residues 364 to 404 (DCKLPSNPCATTNACDKSTGPCISNPCGLRARCGPCNTFGY).

It belongs to the intermediate filament family. In terms of tissue distribution, expressed in the hair follicles.

The chain is Keratin, type I cuticular Ha3-I (KRT33A) from Homo sapiens (Human).